The chain runs to 110 residues: Thiosulfate sulfurtransferase GlpE (110 aa).

Residues 17–105 enclose the Rhodanese domain; sequence RENGAQVVDI…WRSVYPADTS (89 aa). C65 serves as the catalytic Cysteine persulfide intermediate.

Belongs to the GlpE family.

It is found in the cytoplasm. It carries out the reaction thiosulfate + hydrogen cyanide = thiocyanate + sulfite + 2 H(+). The catalysed reaction is thiosulfate + [thioredoxin]-dithiol = [thioredoxin]-disulfide + hydrogen sulfide + sulfite + 2 H(+). In terms of biological role, transferase that catalyzes the transfer of sulfur from thiosulfate to thiophilic acceptors such as cyanide or dithiols. May function in a CysM-independent thiosulfate assimilation pathway by catalyzing the conversion of thiosulfate to sulfite, which can then be used for L-cysteine biosynthesis. This Pseudomonas aeruginosa (strain LESB58) protein is Thiosulfate sulfurtransferase GlpE.